The following is an 89-amino-acid chain: Small ribosomal subunit protein uS15 (89 aa).

This sequence belongs to the universal ribosomal protein uS15 family. In terms of assembly, part of the 30S ribosomal subunit. Forms a bridge to the 50S subunit in the 70S ribosome, contacting the 23S rRNA.

Functionally, one of the primary rRNA binding proteins, it binds directly to 16S rRNA where it helps nucleate assembly of the platform of the 30S subunit by binding and bridging several RNA helices of the 16S rRNA. Forms an intersubunit bridge (bridge B4) with the 23S rRNA of the 50S subunit in the ribosome. The chain is Small ribosomal subunit protein uS15 from Yersinia pseudotuberculosis serotype O:1b (strain IP 31758).